The following is an 80-amino-acid chain: Putative membrane protein insertion efficiency factor (80 aa).

Belongs to the UPF0161 family.

The protein localises to the cell inner membrane. Could be involved in insertion of integral membrane proteins into the membrane. This chain is Putative membrane protein insertion efficiency factor, found in Syntrophobacter fumaroxidans (strain DSM 10017 / MPOB).